The following is a 625-amino-acid chain: Probable potassium transport system protein Kup 2 (625 aa).

The next 12 helical transmembrane spans lie at 15-35 (LSFA…LYAF), 52-72 (ILSL…LVIV), 98-118 (GGWL…DGIL), 134-154 (LSPN…FFLF), 164-184 (IGIY…VLGF), 203-223 (IYFF…VFLV), 246-266 (WFAV…AFVL), 284-304 (FLPV…QAII), 336-356 (VYLP…VVIF), 365-385 (AYGI…GIIA), 394-414 (FKVM…AGNI), and 417-437 (LLTG…VMYT).

Belongs to the HAK/KUP transporter (TC 2.A.72) family.

It localises to the cell inner membrane. The enzyme catalyses K(+)(in) + H(+)(in) = K(+)(out) + H(+)(out). Transport of potassium into the cell. Likely operates as a K(+):H(+) symporter. This is Probable potassium transport system protein Kup 2 from Legionella pneumophila subsp. pneumophila (strain Philadelphia 1 / ATCC 33152 / DSM 7513).